The sequence spans 123 residues: Large ribosomal subunit protein bL12 (123 aa).

The protein belongs to the bacterial ribosomal protein bL12 family. As to quaternary structure, homodimer. Part of the ribosomal stalk of the 50S ribosomal subunit. Forms a multimeric L10(L12)X complex, where L10 forms an elongated spine to which 2 to 4 L12 dimers bind in a sequential fashion. Binds GTP-bound translation factors.

In terms of biological role, forms part of the ribosomal stalk which helps the ribosome interact with GTP-bound translation factors. Is thus essential for accurate translation. This chain is Large ribosomal subunit protein bL12, found in Photorhabdus laumondii subsp. laumondii (strain DSM 15139 / CIP 105565 / TT01) (Photorhabdus luminescens subsp. laumondii).